Here is a 1367-residue protein sequence, read N- to C-terminus: MAP3K epsilon protein kinase 2 (1367 aa).

Residues 20-274 (YMLGDEIGKG…AKTLLSHPWI (255 aa)) form the Protein kinase domain. HEAT repeat units follow at residues 25–62 (EIGK…EDLN) and 86–125 (LKTK…TVYI). Residues 26-34 (IGKGAYGRV) and K49 contribute to the ATP site. D144 serves as the catalytic Proton acceptor. The HEAT 3 repeat unit spans residues 218 to 256 (PYYDLQPMPALYRIVQDDTPPIPDSLSPDITDFLRLCFK). 2 disordered regions span residues 285–422 (LRHS…GRRN) and 437–513 (SSHS…VADG). The span at 293 to 306 (YMKETDSSSEKDAE) shows a compositional bias: basic and acidic residues. The segment covering 351 to 363 (LGEEGTDSEDDIN) has biased composition (acidic residues). A compositionally biased stretch (polar residues) spans 378–396 (RQSGTCSISSDAKGTSQDV). 2 stretches are compositionally biased toward basic and acidic residues: residues 397–408 (LENHEKYDRDEI) and 475–491 (SLHD…EGKT). A compositionally biased stretch (polar residues) spans 492-507 (NEASTSTPTANVNQGD). HEAT repeat units lie at residues 538–576 (SQDG…LFPL), 577–614 (QAVE…RPGQ), 633–658 (IPKS…DFLE), 659–700 (NACL…SSPL), and 704–742 (MFIS…VFKL). The disordered stretch occupies residues 792 to 860 (PRARSGQLDP…LHPDGDRPRL (69 aa)). 2 stretches are compositionally biased toward polar residues: residues 799–814 (LDPN…TSPS) and 835–845 (ALTSNSQSSDV). Basic and acidic residues predominate over residues 846–859 (HQPDALHPDGDRPR). HEAT repeat units lie at residues 850 to 888 (ALHP…STDK), 906 to 943 (DQVR…HESR), 1045 to 1066 (DYLE…TVKS), 1067 to 1105 (YMCS…DPNC), 1112 to 1150 (ADAI…INKR), 1154 to 1191 (QAAE…ASRN), 1196 to 1236 (LRAH…KVEQ), 1257 to 1280 (RHFV…NKTL), 1281 to 1317 (ALNG…KHPK), and 1347 to 1367 (QVLV…NTIL).

This sequence belongs to the protein kinase superfamily. Ser/Thr protein kinase family. Autophosphorylated. In terms of tissue distribution, expressed in both the sporophytic and the gametophytic tissues, especially in dividing cells. Mostly present in flower buds and mature flowers. Also accumulates in embryos and in roots.

The protein resides in the cytoplasm. It localises to the cytoskeleton. It is found in the microtubule organizing center. The protein localises to the nucleus. Its subcellular location is the nucleolus. The protein resides in the cell membrane. It catalyses the reaction L-seryl-[protein] + ATP = O-phospho-L-seryl-[protein] + ADP + H(+). The enzyme catalyses L-threonyl-[protein] + ATP = O-phospho-L-threonyl-[protein] + ADP + H(+). Serine/threonine-protein kinase involved in the spatial and temporal control system organizing cortical activities in mitotic and postmitotic cells. Required for the normal functioning of the plasma membrane in developing pollen. Involved in the regulation of cell expansion and embryo development. In Arabidopsis thaliana (Mouse-ear cress), this protein is MAP3K epsilon protein kinase 2.